Here is a 349-residue protein sequence, read N- to C-terminus: Phenylalanine--tRNA ligase alpha subunit (349 aa).

A Mg(2+)-binding site is contributed by Glu258.

This sequence belongs to the class-II aminoacyl-tRNA synthetase family. Phe-tRNA synthetase alpha subunit type 1 subfamily. Tetramer of two alpha and two beta subunits. Mg(2+) serves as cofactor.

It localises to the cytoplasm. It catalyses the reaction tRNA(Phe) + L-phenylalanine + ATP = L-phenylalanyl-tRNA(Phe) + AMP + diphosphate + H(+). In Rickettsia felis (strain ATCC VR-1525 / URRWXCal2) (Rickettsia azadi), this protein is Phenylalanine--tRNA ligase alpha subunit.